The sequence spans 265 residues: 2-C-methyl-D-erythritol 4-phosphate cytidylyltransferase (265 aa).

A compositionally biased stretch (basic and acidic residues) spans 231–241 (DRGGASREAER). The segment at 231 to 265 (DRGGASREAERSAMPSAATSVFSGARSAASGSEEV) is disordered. The segment covering 253–265 (SGARSAASGSEEV) has biased composition (low complexity).

The protein belongs to the IspD/TarI cytidylyltransferase family. IspD subfamily.

The catalysed reaction is 2-C-methyl-D-erythritol 4-phosphate + CTP + H(+) = 4-CDP-2-C-methyl-D-erythritol + diphosphate. The protein operates within isoprenoid biosynthesis; isopentenyl diphosphate biosynthesis via DXP pathway; isopentenyl diphosphate from 1-deoxy-D-xylulose 5-phosphate: step 2/6. In terms of biological role, catalyzes the formation of 4-diphosphocytidyl-2-C-methyl-D-erythritol from CTP and 2-C-methyl-D-erythritol 4-phosphate (MEP). In Xanthomonas campestris pv. campestris (strain B100), this protein is 2-C-methyl-D-erythritol 4-phosphate cytidylyltransferase.